Reading from the N-terminus, the 520-residue chain is EGF domain-specific O-linked N-acetylglucosamine transferase (520 aa).

The signal sequence occupies residues 1 to 16; sequence MPILPILIGILHLSLA. 3 N-linked (GlcNAc...) asparagine glycosylation sites follow: asparagine 52, asparagine 176, and asparagine 250. Residues 292–294 carry the Required for optimal activity motif; sequence DVE. N-linked (GlcNAc...) asparagine glycosylation occurs at asparagine 479. The short motif at 517–520 is the Prevents secretion from ER element; the sequence is RNEL.

A divalent metal cation is required as a cofactor.

It localises to the endoplasmic reticulum lumen. It catalyses the reaction L-seryl-[protein] + UDP-N-acetyl-alpha-D-glucosamine = 3-O-(N-acetyl-beta-D-glucosaminyl)-L-seryl-[protein] + UDP + H(+). It carries out the reaction L-threonyl-[protein] + UDP-N-acetyl-alpha-D-glucosamine = 3-O-(N-acetyl-beta-D-glucosaminyl)-L-threonyl-[protein] + UDP + H(+). In terms of biological role, catalyzes the transfer of a single N-acetylglucosamine from UDP-GlcNAc to a serine or threonine residue in extracellular proteins resulting in their modification with a beta-linked N-acetylglucosamine (O-GlcNAc). Specifically glycosylates the Thr residue located between the fifth and sixth conserved cysteines of folded EGF-like domains. Involved in epithelial cell adhesion/interaction with the extracellular matrix by mediating glycosylation of proteins in the secretory pathway, such as Dumpy (Dp). The polypeptide is EGF domain-specific O-linked N-acetylglucosamine transferase (Eogt) (Drosophila melanogaster (Fruit fly)).